A 220-amino-acid polypeptide reads, in one-letter code: Orotidine 5'-phosphate decarboxylase (220 aa).

Substrate contacts are provided by residues aspartate 12, lysine 34, aspartate 60–threonine 69, serine 117, proline 170–serine 180, glycine 193, and arginine 194. Lysine 62 serves as the catalytic Proton donor.

The protein belongs to the OMP decarboxylase family. Type 1 subfamily. In terms of assembly, homodimer.

It carries out the reaction orotidine 5'-phosphate + H(+) = UMP + CO2. It functions in the pathway pyrimidine metabolism; UMP biosynthesis via de novo pathway; UMP from orotate: step 2/2. Its function is as follows. Catalyzes the decarboxylation of orotidine 5'-monophosphate (OMP) to uridine 5'-monophosphate (UMP). The chain is Orotidine 5'-phosphate decarboxylase from Methanosarcina mazei (strain ATCC BAA-159 / DSM 3647 / Goe1 / Go1 / JCM 11833 / OCM 88) (Methanosarcina frisia).